A 493-amino-acid polypeptide reads, in one-letter code: Acetylcholine receptor subunit epsilon (493 aa).

Residues 1 to 20 form the signal peptide; that stretch reads MARAPLGVLLLLGLLGRGVG. Over 21-239 the chain is Extracellular; it reads KNEELRLYHH…VIYSLIIRRK (219 aa). N-linked (GlcNAc...) asparagine glycans are attached at residues Asn86 and Asn161. Cysteines 148 and 162 form a disulfide. Residues 240-264 form a helical membrane-spanning segment; that stretch reads PLFYVINIIVPCVLISGLVLLAYFL. Over 265–272 the chain is Cytoplasmic; that stretch reads PAQAGGQK. Residues 273 to 291 traverse the membrane as a helical segment; that stretch reads CTVSINVLLAQTVFLFLIA. Topologically, residues 292–306 are extracellular; it reads QKIPETSLSVPLLGR. A helical membrane pass occupies residues 307–328; that stretch reads FLIFVMVVATLIVMNCVIVLNV. At 329–456 the chain is on the cytoplasmic side; it reads SQRTPTTHAM…WVRMGNALDN (128 aa). The chain crosses the membrane as a helical span at residues 457–480; sequence ICFWAALVLFSVGSSLIFLGAYFN. Over 481-493 the chain is Extracellular; it reads RVPDLPYAPCIQP.

It belongs to the ligand-gated ion channel (TC 1.A.9) family. Acetylcholine receptor (TC 1.A.9.1) subfamily. Epsilon/CHRNE sub-subfamily. As to quaternary structure, pentamer of two alpha chains, and one each of the beta, delta, and gamma (in immature muscle) or epsilon (in mature muscle) chains. The muscle heteropentamer composed of alpha-1, beta-1, delta, epsilon subunits interacts with the alpha-conotoxin ImII.

It localises to the postsynaptic cell membrane. The protein localises to the cell membrane. It catalyses the reaction K(+)(in) = K(+)(out). The catalysed reaction is Na(+)(in) = Na(+)(out). In terms of biological role, after binding acetylcholine, the AChR responds by an extensive change in conformation that affects all subunits and leads to opening of an ion-conducting channel across the plasma membrane. The sequence is that of Acetylcholine receptor subunit epsilon from Homo sapiens (Human).